A 238-amino-acid polypeptide reads, in one-letter code: 1-(5-phosphoribosyl)-5-[(5-phosphoribosylamino)methylideneamino] imidazole-4-carboxamide isomerase (238 aa).

Asp-8 (proton acceptor) is an active-site residue. Asp-130 serves as the catalytic Proton donor.

This sequence belongs to the HisA/HisF family.

It is found in the cytoplasm. The enzyme catalyses 1-(5-phospho-beta-D-ribosyl)-5-[(5-phospho-beta-D-ribosylamino)methylideneamino]imidazole-4-carboxamide = 5-[(5-phospho-1-deoxy-D-ribulos-1-ylimino)methylamino]-1-(5-phospho-beta-D-ribosyl)imidazole-4-carboxamide. It participates in amino-acid biosynthesis; L-histidine biosynthesis; L-histidine from 5-phospho-alpha-D-ribose 1-diphosphate: step 4/9. The chain is 1-(5-phosphoribosyl)-5-[(5-phosphoribosylamino)methylideneamino] imidazole-4-carboxamide isomerase from Methanococcus maripaludis (strain C7 / ATCC BAA-1331).